Consider the following 360-residue polypeptide: Peptide chain release factor 1 (360 aa).

Q235 carries the N5-methylglutamine modification. A compositionally biased stretch (basic and acidic residues) spans 280–293 (DKQSHEQQAKEAAT). A disordered region spans residues 280–300 (DKQSHEQQAKEAATRKSLIGS).

It belongs to the prokaryotic/mitochondrial release factor family. In terms of processing, methylated by PrmC. Methylation increases the termination efficiency of RF1.

Its subcellular location is the cytoplasm. In terms of biological role, peptide chain release factor 1 directs the termination of translation in response to the peptide chain termination codons UAG and UAA. The protein is Peptide chain release factor 1 of Paraburkholderia phytofirmans (strain DSM 17436 / LMG 22146 / PsJN) (Burkholderia phytofirmans).